The following is a 555-amino-acid chain: MSSTLDTITPMPEGGNNQTFVNISKEDLKVETEHYENVAYIANAHDGLIDENLVRAENEDKVTPYFMFLISVAAIAGFLFGYDTGIVGAALPMVGTSLGHTLSATESEIITAGTTIGAIFGASILGTMADKLGRKWAMIISDFAFTAGAIIIAASYSVPQIIVGRLVLGVGVGGAAVIAPLYIAELAPTAVRGRCVGANAFCIPFGQVVASAIGAGFQAGVPYHIGWRVLFGLGVVPSVVQLCLMHFLPESPRVLVLRGKEQEARACLKKIYGNATDDIIDLKLRIVKQYVAATTTMQRDLSFTERAKKYWTHKPYRRAIISVSGVQAFGQLTGFNTLLYYSGTIFGLLGLKNGAAAGLIPSCLNALFVFIGMSIVDKVGRRKLMITFIPGMMIAFTWTIISFHFLTKPTGGLLLKDYQYSTPLVGSVLGSIVLFVIPFGLTYSHIIWYQSEFLPLEIRAAGSAISTTACWLANLVVSVAYLTQLEKLGATGTYGLYLGFITIGYIFVYFCYPETKGLSIDETAEIFIDGFGIEKAHQMLREKRAFAAELYAGRA.

The Cytoplasmic portion of the chain corresponds to 1–61 (MSSTLDTITP…NLVRAENEDK (61 aa)). The helical transmembrane segment at 62–82 (VTPYFMFLISVAAIAGFLFGY) threads the bilayer. Residues 83–108 (DTGIVGAALPMVGTSLGHTLSATESE) lie on the Extracellular side of the membrane. A helical membrane pass occupies residues 109 to 129 (IITAGTTIGAIFGASILGTMA). The Cytoplasmic portion of the chain corresponds to 130 to 142 (DKLGRKWAMIISD). The helical transmembrane segment at 143–163 (FAFTAGAIIIAASYSVPQIIV) threads the bilayer. Over 164 to 165 (GR) the chain is Extracellular. The chain crosses the membrane as a helical span at residues 166 to 186 (LVLGVGVGGAAVIAPLYIAEL). Residues 187 to 200 (APTAVRGRCVGANA) are Cytoplasmic-facing. Residues 201-221 (FCIPFGQVVASAIGAGFQAGV) traverse the membrane as a helical segment. Residues 222–228 (PYHIGWR) are Extracellular-facing. The chain crosses the membrane as a helical span at residues 229 to 249 (VLFGLGVVPSVVQLCLMHFLP). Residues 250–328 (ESPRVLVLRG…AIISVSGVQA (79 aa)) are Cytoplasmic-facing. A helical membrane pass occupies residues 329–349 (FGQLTGFNTLLYYSGTIFGLL). Over 350-355 (GLKNGA) the chain is Extracellular. A helical transmembrane segment spans residues 356–376 (AAGLIPSCLNALFVFIGMSIV). Residues 377–385 (DKVGRRKLM) lie on the Cytoplasmic side of the membrane. Residues 386-406 (ITFIPGMMIAFTWTIISFHFL) form a helical membrane-spanning segment. At 407–427 (TKPTGGLLLKDYQYSTPLVGS) the chain is on the extracellular side. Residues 428-448 (VLGSIVLFVIPFGLTYSHIIW) form a helical membrane-spanning segment. The Cytoplasmic segment spans residues 449 to 461 (YQSEFLPLEIRAA). Residues 462 to 482 (GSAISTTACWLANLVVSVAYL) form a helical membrane-spanning segment. Topologically, residues 483–487 (TQLEK) are extracellular. The chain crosses the membrane as a helical span at residues 488–508 (LGATGTYGLYLGFITIGYIFV). Residues 509 to 555 (YFCYPETKGLSIDETAEIFIDGFGIEKAHQMLREKRAFAAELYAGRA) lie on the Cytoplasmic side of the membrane.

Belongs to the major facilitator superfamily. Sugar transporter (TC 2.A.1.1) family.

Its subcellular location is the cell membrane. It carries out the reaction myo-inositol(out) + H(+)(out) = myo-inositol(in) + H(+)(in). In terms of biological role, transporter for myo-inositol. This is Myo-inositol transporter 2 from Cryptococcus neoformans var. grubii serotype A (strain H99 / ATCC 208821 / CBS 10515 / FGSC 9487) (Filobasidiella neoformans var. grubii).